A 296-amino-acid chain; its full sequence is Arginase (296 aa).

Residues His97, Asp120, His122, and Asp124 each coordinate Mn(2+). Substrate is bound by residues 122 to 126 (HGDLN), 133 to 135 (SGN), and Asp176. Asp223 and Asp225 together coordinate Mn(2+). Substrate contacts are provided by Thr237 and Glu268.

It belongs to the arginase family. The cofactor is Mn(2+).

The catalysed reaction is L-arginine + H2O = urea + L-ornithine. It participates in nitrogen metabolism; urea cycle; L-ornithine and urea from L-arginine: step 1/1. Its function is as follows. Involved in the catabolism of arginine. The polypeptide is Arginase (Bacillus subtilis (strain 168)).